The sequence spans 418 residues: Tyrosine--tRNA ligase (418 aa).

Tyr-34 lines the L-tyrosine pocket. The 'HIGH' region motif lies at Pro-39 to His-48. Tyr-169 and Gln-173 together coordinate L-tyrosine. A 'KMSKS' region motif is present at residues Lys-229–Ser-233. Lys-232 is an ATP binding site. Positions Leu-352–Tyr-418 constitute an S4 RNA-binding domain.

Belongs to the class-I aminoacyl-tRNA synthetase family. TyrS type 1 subfamily. In terms of assembly, homodimer.

Its subcellular location is the cytoplasm. The enzyme catalyses tRNA(Tyr) + L-tyrosine + ATP = L-tyrosyl-tRNA(Tyr) + AMP + diphosphate + H(+). In terms of biological role, catalyzes the attachment of tyrosine to tRNA(Tyr) in a two-step reaction: tyrosine is first activated by ATP to form Tyr-AMP and then transferred to the acceptor end of tRNA(Tyr). The polypeptide is Tyrosine--tRNA ligase (Streptococcus pyogenes serotype M3 (strain SSI-1)).